Here is an 831-residue protein sequence, read N- to C-terminus: von Willebrand factor A domain-containing protein DDB_G0285981 (831 aa).

The region spanning 60-188 (RDTFGLKTFS…NVTIHLTIIS (129 aa)) is the VIT domain. Residues 312 to 480 (EFIFLIDCSG…NFEEQVMKLV (169 aa)) form the VWFA domain.

The chain is von Willebrand factor A domain-containing protein DDB_G0285981 from Dictyostelium discoideum (Social amoeba).